The primary structure comprises 440 residues: Actin-like protein 7A (440 aa).

Residues 1 to 27 (MSLDAVWAPQTANIGDGPAKKASDQTS) are disordered. The tract at residues 36–56 (ASLRDGPAKRAVWVRRDNAEK) is required for interaction with TES.

This sequence belongs to the actin family. In terms of assembly, interacts (via N-terminus) with TES (via LIM domain 2). Heterodimer with TES; the heterodimer interacts with ENAH to form a heterotrimer. Interacts with ACTL9. Interacts with CYLC1; the interaction may be relevant for proper acrosome attachment to the nuclear envelope. Detected in testis. Detected at the acrosome of round spermatids (at protein level).

It localises to the cytoplasm. The protein resides in the cytoskeleton. It is found in the golgi apparatus. Its subcellular location is the nucleus. Its function is as follows. Essential for normal spermatogenesis and male fertility. Required for normal sperm head morphology, acroplaxome formation, acrosome attachment, and acrosome granule stability. May anchor and stabilize acrosomal adherence to the acroplaxome at least in part by facilitating the presence of F-actin in the subacrosomal space. May play an important role in formation and fusion of Golgi-derived vesicles during acrosome biogenesis. In Rattus norvegicus (Rat), this protein is Actin-like protein 7A (Actl7a).